A 134-amino-acid polypeptide reads, in one-letter code: Ribosome-binding factor A (134 aa).

It belongs to the RbfA family. In terms of assembly, monomer. Binds 30S ribosomal subunits, but not 50S ribosomal subunits or 70S ribosomes.

It localises to the cytoplasm. One of several proteins that assist in the late maturation steps of the functional core of the 30S ribosomal subunit. Associates with free 30S ribosomal subunits (but not with 30S subunits that are part of 70S ribosomes or polysomes). Required for efficient processing of 16S rRNA. May interact with the 5'-terminal helix region of 16S rRNA. The chain is Ribosome-binding factor A from Rhizobium leguminosarum bv. trifolii (strain WSM2304).